The chain runs to 1096 residues: Eukaryotic translation initiation factor 3 subunit A (1096 aa).

The PCI domain occupies 323-502 (QATRVLLATL…GSIHFGAADA (180 aa)). Coiled-coil stretches lie at residues 591 to 643 (SERQ…IDRK), 677 to 761 (SVLR…RMQK), and 811 to 839 (KEGA…ERRA). Basic and acidic residues predominate over residues 808–852 (ELPKEGAEERMASAREVAEQTRRDEQEKERRAVRESQRPSKREIV). Positions 808 to 1096 (ELPKEGAEER…ADDDRNWRQK (289 aa)) are disordered. The span at 865–875 (AQPTQPRTISS) shows a compositional bias: polar residues. Basic and acidic residues-rich tracts occupy residues 878 to 890 (FGER…RYRE), 933 to 942 (SNREQARGEA), and 955 to 973 (QRDR…KRGE). Over residues 1008–1023 (DSSQRTSAATPTTQPW) the composition is skewed to polar residues. The segment covering 1085-1096 (GAADDDRNWRQK) has biased composition (basic and acidic residues).

The protein belongs to the eIF-3 subunit A family. In terms of assembly, component of the eukaryotic translation initiation factor 3 (eIF-3) complex.

The protein localises to the cytoplasm. In terms of biological role, RNA-binding component of the eukaryotic translation initiation factor 3 (eIF-3) complex, which is involved in protein synthesis of a specialized repertoire of mRNAs and, together with other initiation factors, stimulates binding of mRNA and methionyl-tRNAi to the 40S ribosome. The eIF-3 complex specifically targets and initiates translation of a subset of mRNAs involved in cell proliferation. In Brugia malayi (Filarial nematode worm), this protein is Eukaryotic translation initiation factor 3 subunit A.